A 1027-amino-acid polypeptide reads, in one-letter code: MASSRMYLLVKCMLILQLMVLIAKNSRALICLPCDKSKCEEPKPCTGSVVLGICGCCSVCAKQKNESCGGVYGLYGTCDRGLRCVIRPPLNGGSITQYEVGNCEDENWDDDQLLGFEPCNENLVTGCNIIDGKCECDSVRTCNNPFEFASQEACQTALQKIEEERPDCSKARCEVQFSPRCPEDSILIEGYAPPGECCPLPSRCVCSPAGCLRKVCQPGHLNILVSKSSGKPGECCDLYECKPVFSVDCSTVECPPVKPVQCPADSYETQVRLTADGCCTLPTRCECLPGLCTFPQCSAGMSPQVMSRGDGTPGRCCDVFECVNETKPACTLNGVEYHDGDMFRMDACRFCRCQGGVSVCFTAQCGVLHCERYYVPDGECCPVCEDPIYPVLSLAGCYVNGQILAHGDHWREDDCTFCQCVSGDARCVAAACGHSCLNPVTVPGECCPVCEEPTYITMAPPACGSLDNCTLLEQSCAFGFRLDPSGCRTCACKSREELCGGLMASCTLKCPFGFQTDIHGCDVCQCRPRHKKCKAVACAKDCPFGYIKNKHGCDTCRCKKCPELPCDKACPMGFQHDELGCLICQCRDQSSSSVTPAVKLGSCLSMDGRRHENGQSWHDGCRDCYCHAGREMCALISCPVPPCDNPTIRPGHCCPTCPEESSSHKPELSEASVCLAPGGEYFVEGETWNIDSCTQCTCHSGRVLCETEVCPPLLCHSPIRTQDSCCPHCPDDPVTPQTPSNDSMPSYCRNEDGDIFLAAESWKPNVCSSCVCLDGAISCFSESCPPVNCARPVLRKGQCCPYCLDATPRAVCHFNGKTYMDEERWDIDSCTHCYCLQGQTLCSTVSCPALPCHQPLTVEGSCCPMCPESYAPTNVPIEKTDQRGDKSRHQPAWPTHSENDVMPQFRGEFGSLQMPYLDGKTPLPSEDAGLHWAWVALPVLMMMLTLAALLLVNQRKQWIPVPCYRTPNKSTCLNNQLVYVDCQKGTKVQVDSSQRMLRIADPDSRYSGYYSMQKHNNLQADNFYQTA.

An N-terminal signal peptide occupies residues 1–28 (MASSRMYLLVKCMLILQLMVLIAKNSRA). In terms of domain architecture, IGFBP N-terminal spans 29-106 (LICLPCDKSK…QYEVGNCEDE (78 aa)). The Extracellular portion of the chain corresponds to 29–931 (LICLPCDKSK…PLPSEDAGLH (903 aa)). Intrachain disulfides connect Cys-31/Cys-54, Cys-34/Cys-56, Cys-39/Cys-57, and Cys-45/Cys-60. Asn-65 carries N-linked (GlcNAc...) asparagine glycosylation. 2 cysteine pairs are disulfide-bonded: Cys-68–Cys-84 and Cys-78–Cys-103. Positions 308–310 (RGD) match the Cell attachment site motif. The N-linked (GlcNAc...) asparagine glycan is linked to Asn-324. 2 consecutive VWFC domains span residues 328-385 (PACT…PVCE) and 395-451 (AGCY…PVCE). Antistasin-like domains lie at 463–492 (CGSL…TCAC), 499–526 (CGGL…VCQC), 533–558 (CKAV…TCRC), and 561–586 (CPEL…ICQC). An N-linked (GlcNAc...) asparagine glycan is attached at Asn-468. 2 consecutive VWFC domains span residues 601–658 (GSCL…PTCP) and 672–730 (SVCL…PHCP). Residue Asn-741 is glycosylated (N-linked (GlcNAc...) asparagine). 2 consecutive VWFC domains span residues 746 to 804 (SYCR…PYCL) and 810 to 867 (AVCH…PMCP). A disordered region spans residues 877 to 897 (IEKTDQRGDKSRHQPAWPTHS). Over residues 878–888 (EKTDQRGDKSR) the composition is skewed to basic and acidic residues. The short motif at 883–885 (RGD) is the Cell attachment site element. A helical membrane pass occupies residues 932-952 (WAWVALPVLMMMLTLAALLLV). The Cytoplasmic segment spans residues 953 to 1027 (NQRKQWIPVP…LQADNFYQTA (75 aa)).

The protein localises to the membrane. Its function is as follows. May play a role in CNS development by interacting with growth factors implicated in motor neuron differentiation and survival. The protein is Cysteine-rich motor neuron 1 protein (crim1) of Danio rerio (Zebrafish).